Consider the following 148-residue polypeptide: Large ribosomal subunit protein bL9 (148 aa).

This sequence belongs to the bacterial ribosomal protein bL9 family.

Its function is as follows. Binds to the 23S rRNA. The protein is Large ribosomal subunit protein bL9 of Listeria monocytogenes serotype 4a (strain HCC23).